Reading from the N-terminus, the 494-residue chain is Tripartite motif-containing protein 5 (494 aa).

N-acetylalanine is present on Ala2. Residues 15-59 (CPICLELLTEPLSLDCGHSFCQACITANHKESTLHQGERSCPLCR) form an RING-type zinc finger. The residue at position 86 (Ser86) is a Phosphoserine. The B box-type zinc finger occupies 91–132 (QKVDHCARHGEKLLLFCQQDGNVICWLCERSQEHRGHHTFLV). Zn(2+) contacts are provided by Cys96, His99, Cys118, and His124. Residues 132–223 (VEEVAEKYQG…RLVQSESDMV (92 aa)) adopt a coiled-coil conformation. The segment at 186–199 (FKQLRDILDCEESK) is required for interaction with GABARAP and for autophagy. The B30.2/SPRY domain occupies 280–494 (PDLKGMLQAF…LPMTLCSPSS (215 aa)).

It belongs to the TRIM/RBCC family. As to quaternary structure, can form homodimers and homotrimers. In addition to lower-order dimerization, also exhibits a higher-order multimerization and both low- and high-order multimerizations are essential for its restriction activity. Interacts with BTBD1 and BTBD2. Interacts with PSMC4, PSMC5, PSMD7 and HSPA8/HSC70. Interacts (via B30.2/SPRY domain) with HSPA1A/B. Interacts with PSMC2, MAP3K7/TAK1, TAB2 and TAB3. Interacts with SQSTM1. Interacts with TRIM6 and TRIM34. Interacts with ULK1 (phosphorylated form), GABARAP, GABARAPL1, GABARAPL2, MAP1LC3A, MAP1LC3C and BECN1. In terms of processing, degraded in a proteasome-independent fashion in the absence of viral infection but in a proteasome-dependent fashion following exposure to restriction sensitive virus. Autoubiquitinated in a RING finger- and UBE2D2-dependent manner. Monoubiquitinated by TRIM21. Deubiquitinated by Yersinia YopJ. Ubiquitination may not lead to proteasomal degradation.

The protein resides in the cytoplasm. The protein localises to the nucleus. It carries out the reaction S-ubiquitinyl-[E2 ubiquitin-conjugating enzyme]-L-cysteine + [acceptor protein]-L-lysine = [E2 ubiquitin-conjugating enzyme]-L-cysteine + N(6)-ubiquitinyl-[acceptor protein]-L-lysine.. It participates in protein modification; protein ubiquitination. Functionally, capsid-specific restriction factor that prevents infection from non-host-adapted retroviruses. Blocks viral replication early in the life cycle, after viral entry but before reverse transcription. In addition to acting as a capsid-specific restriction factor, also acts as a pattern recognition receptor that activates innate immune signaling in response to the retroviral capsid lattice. Binding to the viral capsid triggers its E3 ubiquitin ligase activity, and in concert with the heterodimeric ubiquitin conjugating enzyme complex UBE2V1-UBE2N (also known as UBC13-UEV1A complex) generates 'Lys-63'-linked polyubiquitin chains, which in turn are catalysts in the autophosphorylation of the MAP3K7/TAK1 complex (includes TAK1, TAB2, and TAB3). Activation of the MAP3K7/TAK1 complex by autophosphorylation results in the induction and expression of NF-kappa-B and MAPK-responsive inflammatory genes, thereby leading to an innate immune response in the infected cell. Plays a role in regulating autophagy through activation of autophagy regulator BECN1 by causing its dissociation from its inhibitors BCL2 and TAB2. The polypeptide is Tripartite motif-containing protein 5 (TRIM5) (Cebuella pygmaea (Pygmy marmoset)).